The chain runs to 325 residues: Probable cell division protein WhiA (325 aa).

The segment at residues 273 to 306 (SLEELGRLADPPMTKDAVAGRIRRLLSMADRKAK) is a DNA-binding region (H-T-H motif).

This sequence belongs to the WhiA family.

Its function is as follows. Involved in cell division and chromosome segregation. This is Probable cell division protein WhiA from Mycobacterium bovis (strain BCG / Tokyo 172 / ATCC 35737 / TMC 1019).